We begin with the raw amino-acid sequence, 358 residues long: 3-isopropylmalate dehydrogenase (358 aa).

NAD(+) is bound at residue 79–92 (GPKWEHLPPDEQPE). Positions 100, 110, 139, and 227 each coordinate substrate. Positions 227, 251, and 255 each coordinate Mg(2+). Residue 285 to 297 (GSAPDIAGKGVAN) participates in NAD(+) binding.

This sequence belongs to the isocitrate and isopropylmalate dehydrogenases family. LeuB type 1 subfamily. As to quaternary structure, homodimer. Mg(2+) is required as a cofactor. Requires Mn(2+) as cofactor.

The protein resides in the cytoplasm. The enzyme catalyses (2R,3S)-3-isopropylmalate + NAD(+) = 4-methyl-2-oxopentanoate + CO2 + NADH. It participates in amino-acid biosynthesis; L-leucine biosynthesis; L-leucine from 3-methyl-2-oxobutanoate: step 3/4. Catalyzes the oxidation of 3-carboxy-2-hydroxy-4-methylpentanoate (3-isopropylmalate) to 3-carboxy-4-methyl-2-oxopentanoate. The product decarboxylates to 4-methyl-2 oxopentanoate. This chain is 3-isopropylmalate dehydrogenase, found in Pseudoalteromonas translucida (strain TAC 125).